Consider the following 136-residue polypeptide: Large ribosomal subunit protein uL16 (136 aa).

The protein belongs to the universal ribosomal protein uL16 family. As to quaternary structure, part of the 50S ribosomal subunit.

Its function is as follows. Binds 23S rRNA and is also seen to make contacts with the A and possibly P site tRNAs. In Vesicomyosocius okutanii subsp. Calyptogena okutanii (strain HA), this protein is Large ribosomal subunit protein uL16.